A 362-amino-acid polypeptide reads, in one-letter code: MLKDLNTNQGLKPWRVESVFYCIVIVLIFIGAFKIAEAVFKPLAISIVLGFLVYPVYTFLARFKVPKFLIVFIIFFLLFSFSYLIFSFVYYSVTVLMKQLPYYQNQLAFIMKDVLSRYKVDSSVINDVNFSGYIYPFLTRAYNEIIGFTSSLVVVFLLLYFLLSEIHVFEMKLDKAFKKPISTRFIGALDTINNQIGKYLGIKILVSCLTGILVFIGLTLFGQDFPLVWAVLSFVFNFIPSIGSILAVFFIVITSLIQFYPNLNIVLYVFIYNTSIQMLIGNILEPKMQGKRLDISPFLLLCFLFFWGWLWGIVGLLISYPFTVIVKVIVDNVSWLKSFSVFLGGSEILSNISHISSKDKEI.

Helical transmembrane passes span 20–40, 43–63, 68–88, 144–164, 212–232, 234–254, 265–285, and 304–326; these read FYCI…EAVF, LAIS…LARF, FLIV…IFSF, EIIG…FLLS, ILVF…WAVL, FVFN…IVIT, IVLY…NILE, and LFFW…TVIV.

This sequence belongs to the autoinducer-2 exporter (AI-2E) (TC 2.A.86) family.

It is found in the cell membrane. This is Putative transport protein BB_0006 from Borreliella burgdorferi (strain ATCC 35210 / DSM 4680 / CIP 102532 / B31) (Borrelia burgdorferi).